We begin with the raw amino-acid sequence, 246 residues long: Octanoyltransferase (246 aa).

The 198-residue stretch at 30–227 folds into the BPL/LPL catalytic domain; the sequence is GRIGNTLLLL…QFGRVFGHQV (198 aa). Residues 75–82, 155–157, and 168–170 each bind substrate; these read RGGDVTYH, AIG, and GFA. Cys-186 functions as the Acyl-thioester intermediate in the catalytic mechanism.

It belongs to the LipB family.

It is found in the cytoplasm. It catalyses the reaction octanoyl-[ACP] + L-lysyl-[protein] = N(6)-octanoyl-L-lysyl-[protein] + holo-[ACP] + H(+). It participates in protein modification; protein lipoylation via endogenous pathway; protein N(6)-(lipoyl)lysine from octanoyl-[acyl-carrier-protein]: step 1/2. Its function is as follows. Catalyzes the transfer of endogenously produced octanoic acid from octanoyl-acyl-carrier-protein onto the lipoyl domains of lipoate-dependent enzymes. Lipoyl-ACP can also act as a substrate although octanoyl-ACP is likely to be the physiological substrate. This Acidobacterium capsulatum (strain ATCC 51196 / DSM 11244 / BCRC 80197 / JCM 7670 / NBRC 15755 / NCIMB 13165 / 161) protein is Octanoyltransferase.